A 413-amino-acid chain; its full sequence is Patatin-like protein 3 (413 aa).

Residues 54–245 enclose the PNPLA domain; that stretch reads LSVDGGARPE…ALGNPTAAAI (192 aa). The GGXR motif lies at 58-61; sequence GGAR. Ser-100 serves as the catalytic Nucleophile. A disordered region spans residues 384–413; that stretch reads EHGRRKQHVPPAASGGGGGGLDCHVSKKQP.

It belongs to the patatin family.

In terms of biological role, possesses non-specific lipolytic acyl hydrolase (LAH) activity. Hydrolyzes phospholipids as well as galactolipids. May play a role in disease resistance. The protein is Patatin-like protein 3 (PLP3) of Oryza sativa subsp. indica (Rice).